The following is a 282-amino-acid chain: Protoheme IX farnesyltransferase (282 aa).

The next 9 helical transmembrane spans lie at 9–29 (LAKP…FLLA), 39–59 (LPLF…GCVF), 79–99 (LVTG…LLIL), 102–122 (LVLY…GFIV), 139–159 (VLGG…VVNI), 165–185 (LALF…IAML), 210–230 (IMLF…VLGS), 231–251 (ADLF…YKSI), and 261–281 (VFAK…CLTM).

Belongs to the UbiA prenyltransferase family. Protoheme IX farnesyltransferase subfamily.

The protein localises to the cell inner membrane. The catalysed reaction is heme b + (2E,6E)-farnesyl diphosphate + H2O = Fe(II)-heme o + diphosphate. The protein operates within porphyrin-containing compound metabolism; heme O biosynthesis; heme O from protoheme: step 1/1. Converts heme B (protoheme IX) to heme O by substitution of the vinyl group on carbon 2 of heme B porphyrin ring with a hydroxyethyl farnesyl side group. The sequence is that of Protoheme IX farnesyltransferase from Francisella tularensis subsp. novicida (strain U112).